The chain runs to 111 residues: Regulator of ribonuclease activity B (111 aa).

Belongs to the RraB family. As to quaternary structure, interacts with the C-terminal region of Rne.

It is found in the cytoplasm. Its function is as follows. Globally modulates RNA abundance by binding to RNase E (Rne) and regulating its endonucleolytic activity. Can modulate Rne action in a substrate-dependent manner by altering the composition of the degradosome. The chain is Regulator of ribonuclease activity B from Pseudoalteromonas translucida (strain TAC 125).